We begin with the raw amino-acid sequence, 494 residues long: MELLGLPTLALLVLVMSLSLLSVWTKMRTGGRLPPGPTPLPIIGNILQLDLKDIPASLSKLAKEYGPVYTLYFGSWPTVVLHGYDVVKEALLNQGDEFLGRGPLPIIEDSQKGHGIVFSEGERWKLLRRFSLMTLKNFGMGKRSLEERVQEEARCLVEELHKTEAQPFDPTFILACAPCNVICSILFNERFPYNDKTFLNLMDLLNKNFYQLNSIWIQMYNLWPTIMKYIPGKHREFSKRLGGVKNFILEKVKEHQESLDPANPRDYIDCFLSKIEEEKHNLKSDFNLENLAICGSNLFTAGTETTSTTLRFGLLLLVKHPEVQAKVHEELDRVIGRHQPPSMKDKMKLPYTDAVLHEIQRYITLLPSSLPHAVVQDTKFRHYVIPKGTAVFPFLSSILLDQKEFPNPEKFDPGHFLDKNGCFKKTDYFVPFSLGKRSCVGEGLARMELFLFFTTILQKFSLKALVEPKDLDIKPVTTGLFNLPPPYKLRLVPR.

Positions 1 to 25 (MELLGLPTLALLVLVMSLSLLSVWT) are cleaved as a signal peptide. S131 carries the phosphoserine modification. N6-acetyllysine occurs at positions 253 and 379. Residue C439 participates in heme binding.

This sequence belongs to the cytochrome P450 family. The cofactor is heme. In terms of tissue distribution, highly expressed in liver, particularly in hepatocytes and bile duct epithelial cells (at protein level). Expressed in nephron segments. Prominent expression is detected in proximal tubules at the corticomedullary junction (at protein level). Also expressed in renal cortical collecting duct. Lower expression levels are detected in adrenal glands.

It localises to the endoplasmic reticulum membrane. It is found in the microsome membrane. It carries out the reaction (5Z,8Z,11Z,14Z)-eicosatetraenoate + reduced [NADPH--hemoprotein reductase] + O2 = (8R,9S)-epoxy-(5Z,11Z,14Z)-eicosatrienoate + oxidized [NADPH--hemoprotein reductase] + H2O + H(+). It catalyses the reaction (5Z,8Z,11Z,14Z)-eicosatetraenoate + reduced [NADPH--hemoprotein reductase] + O2 = (11R,12S)-epoxy-(5Z,8Z,14Z)-eicosatrienoate + oxidized [NADPH--hemoprotein reductase] + H2O + H(+). The enzyme catalyses (5Z,8Z,11Z,14Z)-eicosatetraenoate + reduced [NADPH--hemoprotein reductase] + O2 = 14,15-epoxy-(5Z,8Z,11Z)-eicosatrienoate + oxidized [NADPH--hemoprotein reductase] + H2O + H(+). The catalysed reaction is (5Z,8Z,11Z,14Z,17Z)-eicosapentaenoate + reduced [NADPH--hemoprotein reductase] + O2 = 8,9-epoxy-(5Z,11Z,14Z,17Z)-eicosatetraenoate + oxidized [NADPH--hemoprotein reductase] + H2O + H(+). It carries out the reaction (5Z,8Z,11Z,14Z,17Z)-eicosapentaenoate + reduced [NADPH--hemoprotein reductase] + O2 = 11,12-epoxy-(5Z,8Z,14Z,17Z)-eicosatetraenoate + oxidized [NADPH--hemoprotein reductase] + H2O + H(+). It catalyses the reaction (5Z,8Z,11Z,14Z,17Z)-eicosapentaenoate + reduced [NADPH--hemoprotein reductase] + O2 = 14,15-epoxy-(5Z,8Z,11Z,17Z)-eicosatetraenoate + oxidized [NADPH--hemoprotein reductase] + H2O + H(+). The enzyme catalyses (5Z,8Z,11Z,14Z,17Z)-eicosapentaenoate + reduced [NADPH--hemoprotein reductase] + O2 = (17R,18S)-epoxy-(5Z,8Z,11Z,14Z)-eicosatetraenoate + oxidized [NADPH--hemoprotein reductase] + H2O + H(+). The catalysed reaction is (5Z,8Z,11Z,14Z,17Z)-eicosapentaenoate + reduced [NADPH--hemoprotein reductase] + O2 = (17S,18R)-epoxy-(5Z,8Z,11Z,14Z)-eicosatetraenoate + oxidized [NADPH--hemoprotein reductase] + H2O + H(+). It carries out the reaction 20-hydroxy-(5Z,8Z,11Z,14Z)-eicosatetraenoate + reduced [NADPH--hemoprotein reductase] + O2 = 20-hydroxy-8,9-epoxy-(5Z,11Z,14Z)-eicosatrienoate + oxidized [NADPH--hemoprotein reductase] + H2O + H(+). Its pathway is lipid metabolism; arachidonate metabolism. A cytochrome P450 monooxygenase involved in polyunsaturated fatty acids (PUFAs) metabolism and signaling. Catalyzes preferentially the epoxidation of double bonds of PUFAs. Converts arachidonic acid (ARA, C20:4(n-6)) primarily to stereospecific products 8R,9S-epoxyeicosatrienoate (EET) and 11R,12S-EET. Plays a major role in the formation of EETs and hydroxy-EETs (HEETs) in kidney. Via EETs may inhibit the epithelial sodium channels (ENaCs) in nephron segments, preventing excessive sodium absorption during high dietary salt intake. Participates in the formation of anti-inflammatory hydroxyepoxyeicosatrienoic acids (HEETs) by converting 20-hydroxyeicosatetraenoic acid (20-HETE) to 20,8,9-HEET, an activator of PPARA. Metabolizes eicosapentaenoic acid (EPA, C20:5(n-3)) to epoxyeicosatetraenoic acid (EETeTr) regioisomers, 8,9-, 11,12-, 14,15-, and 17,18- EETeTr, preferentially producing 17R,18S enantiomer. Mechanistically, uses molecular oxygen inserting one oxygen atom into a substrate, and reducing the second into a water molecule, with two electrons provided by NADPH via cytochrome P450 reductase (CPR; NADPH-ferrihemoprotein reductase). The polypeptide is Cytochrome P450 2C44 (Mus musculus (Mouse)).